The sequence spans 308 residues: GMP synthase [glutamine-hydrolyzing] subunit B (308 aa).

Positions 1 to 185 (MDWGRFVEEK…LGLPEKIYNR (185 aa)) constitute a GMPS ATP-PPase domain. Residue 28–34 (SGGVDSS) coordinates ATP.

As to quaternary structure, heterodimer composed of a glutamine amidotransferase subunit (A) and a GMP-binding subunit (B).

It carries out the reaction XMP + L-glutamine + ATP + H2O = GMP + L-glutamate + AMP + diphosphate + 2 H(+). It participates in purine metabolism; GMP biosynthesis; GMP from XMP (L-Gln route): step 1/1. Functionally, catalyzes the synthesis of GMP from XMP. The protein is GMP synthase [glutamine-hydrolyzing] subunit B (guaAB) of Pyrococcus horikoshii (strain ATCC 700860 / DSM 12428 / JCM 9974 / NBRC 100139 / OT-3).